A 645-amino-acid polypeptide reads, in one-letter code: MSETKVYPVPETIQRDAHLNFEQYQEMYNRSIQDPEGFWSEQADKFLDWFSKWGTTCHWDLAKGDIRFFEGGTLNVAYNCVDRHLETRGDQTAIIWEGDEPDQDEHITYRDLYERVGRLANALKARGVKKGDRVCIYLPMVPEAAVAMLACARIGAVHSIVFGGFSPEALRDRIQDADAEVVITSDEGVRGGRSIPLKANTDKALEGCPNVKTVFVVRRTGGDIAWNDGRDVWFHEACAEASPDCPPEHMDAEDPLFILYTSGSTGKPKGVQHSTAGYLLGTAMTHKYIFDYQDGEVYWCTADVGWVTGHSYIVYGPLANGAKTLMFEGVPTYPDAGRFWQVVDKHEVSIFYTAPTAIRALMGQGDDHVKKTSRKSLRILGTVGEPINPEAWEWYYHTIGEDRCPIVDTWWQTETGSILIAPLPGAMDLKPGSATLPFFGVEPQLVDDKGNVLEGATNGNLVINRAWPSMMRTIYGDHERFFNTYLAAYPGKYFTGDGARRDEDGYYWITGRVDDVINVSGHRMGTAEVESALVLHDKVSEAAVVGYPHDVKGQGIYAYVTLMAGEEPSDELKQELVKLCIQEIGPIAKPDIIQFAPGLPKTRSGKIMRRILRKVASNELDSLGDTSTLADPTVVDTLIEDRANQ.

CoA contacts are provided by residues 190–193 and Thr-308; that span reads RGGR. ATP-binding positions include 384–386, 408–413, Asp-497, and Arg-512; these read GEP and DTWWQT. Ser-520 provides a ligand contact to CoA. Arg-523 lines the ATP pocket. Val-534, His-536, and Val-539 together coordinate Mg(2+). An N6-acetyllysine modification is found at Lys-606.

This sequence belongs to the ATP-dependent AMP-binding enzyme family. Requires Mg(2+) as cofactor. In terms of processing, acetylated. Deacetylation by the SIR2-homolog deacetylase activates the enzyme.

The catalysed reaction is acetate + ATP + CoA = acetyl-CoA + AMP + diphosphate. Functionally, catalyzes the conversion of acetate into acetyl-CoA (AcCoA), an essential intermediate at the junction of anabolic and catabolic pathways. AcsA undergoes a two-step reaction. In the first half reaction, AcsA combines acetate with ATP to form acetyl-adenylate (AcAMP) intermediate. In the second half reaction, it can then transfer the acetyl group from AcAMP to the sulfhydryl group of CoA, forming the product AcCoA. This chain is Acetyl-coenzyme A synthetase, found in Halorhodospira halophila (strain DSM 244 / SL1) (Ectothiorhodospira halophila (strain DSM 244 / SL1)).